We begin with the raw amino-acid sequence, 102 residues long: ATP-dependent Clp protease adapter protein ClpS (102 aa).

The protein belongs to the ClpS family. Binds to the N-terminal domain of the chaperone ClpA.

Functionally, involved in the modulation of the specificity of the ClpAP-mediated ATP-dependent protein degradation. This is ATP-dependent Clp protease adapter protein ClpS from Shewanella sp. (strain ANA-3).